A 279-amino-acid polypeptide reads, in one-letter code: Putative potassium channel regulatory protein (279 aa).

Residues 5-74 enclose the BTB domain; it reads ELVTLNVGGM…VRTSQLSLPS (70 aa). The tract at residues 256-279 is disordered; sequence ENSRQENYETETVQVKQAKPNKKR.

The protein resides in the endoplasmic reticulum. Functionally, inhibits potassium fluxes in cells, possibly by retaining potassium channels in the cytoplasm. This is Putative potassium channel regulatory protein (kcnrg) from Xenopus tropicalis (Western clawed frog).